The chain runs to 190 residues: MDTLKDKIRSEGIVLSEHVLKVDAFLNHQIDPQLMQQVGHAFATRFRDQGITKIVTIEASGIAPAVMAGLELGVPVIFARKYQSLTLKDNLYISKVFSFTKQTESTIAISAKHLNAHDHVLVIDDFLANGHAAKALIDLIGQAGASIAGLGIVIEKSFQDGRALLESEGYRVESLARVKSLAGGQVEFLD.

2 residues coordinate xanthine: Leu-20 and Asn-27. A 5-phospho-alpha-D-ribose 1-diphosphate-binding site is contributed by 128 to 132; sequence ANGHA. Lys-156 is a xanthine binding site.

It belongs to the purine/pyrimidine phosphoribosyltransferase family. Xpt subfamily. Homodimer.

It localises to the cytoplasm. It catalyses the reaction XMP + diphosphate = xanthine + 5-phospho-alpha-D-ribose 1-diphosphate. It participates in purine metabolism; XMP biosynthesis via salvage pathway; XMP from xanthine: step 1/1. Its function is as follows. Converts the preformed base xanthine, a product of nucleic acid breakdown, to xanthosine 5'-monophosphate (XMP), so it can be reused for RNA or DNA synthesis. The sequence is that of Xanthine phosphoribosyltransferase from Pseudomonas paraeruginosa (strain DSM 24068 / PA7) (Pseudomonas aeruginosa (strain PA7)).